We begin with the raw amino-acid sequence, 245 residues long: 3-deoxy-manno-octulosonate cytidylyltransferase (245 aa).

Belongs to the KdsB family.

It is found in the cytoplasm. The enzyme catalyses 3-deoxy-alpha-D-manno-oct-2-ulosonate + CTP = CMP-3-deoxy-beta-D-manno-octulosonate + diphosphate. It functions in the pathway nucleotide-sugar biosynthesis; CMP-3-deoxy-D-manno-octulosonate biosynthesis; CMP-3-deoxy-D-manno-octulosonate from 3-deoxy-D-manno-octulosonate and CTP: step 1/1. The protein operates within bacterial outer membrane biogenesis; lipopolysaccharide biosynthesis. Functionally, activates KDO (a required 8-carbon sugar) for incorporation into bacterial lipopolysaccharide in Gram-negative bacteria. This Acaryochloris marina (strain MBIC 11017) protein is 3-deoxy-manno-octulosonate cytidylyltransferase.